The following is a 910-amino-acid chain: Translation factor GUF1 homolog, mitochondrial (910 aa).

Positions arginine 126–glutamine 188 are disordered. The tr-type G domain maps to glutamine 189–alanine 366. GTP-binding positions include alanine 198 to serine 205, aspartate 259 to histidine 263, and asparagine 313 to aspartate 316. A disordered region spans residues glycine 639–isoleucine 683. The segment covering aspartate 646 to glycine 667 has biased composition (low complexity).

Belongs to the TRAFAC class translation factor GTPase superfamily. Classic translation factor GTPase family. LepA subfamily.

It is found in the mitochondrion inner membrane. It catalyses the reaction GTP + H2O = GDP + phosphate + H(+). In terms of biological role, promotes mitochondrial protein synthesis. May act as a fidelity factor of the translation reaction, by catalyzing a one-codon backward translocation of tRNAs on improperly translocated ribosomes. Binds to mitochondrial ribosomes in a GTP-dependent manner. This Plasmodium vivax (strain Salvador I) protein is Translation factor GUF1 homolog, mitochondrial.